A 546-amino-acid chain; its full sequence is Chaperonin GroEL (546 aa).

Residues 29 to 32 (TMGP), Lys-50, 86 to 90 (DGTTT), Gly-414, and Asp-492 each bind ATP.

This sequence belongs to the chaperonin (HSP60) family. As to quaternary structure, forms a cylinder of 14 subunits composed of two heptameric rings stacked back-to-back. Interacts with the co-chaperonin GroES.

It localises to the cytoplasm. It carries out the reaction ATP + H2O + a folded polypeptide = ADP + phosphate + an unfolded polypeptide.. In terms of biological role, together with its co-chaperonin GroES, plays an essential role in assisting protein folding. The GroEL-GroES system forms a nano-cage that allows encapsulation of the non-native substrate proteins and provides a physical environment optimized to promote and accelerate protein folding. The protein is Chaperonin GroEL of Helicobacter pylori (strain ATCC 700392 / 26695) (Campylobacter pylori).